Consider the following 448-residue polypeptide: Proteases secretion protein PrtE (448 aa).

At 1–30 (MTGMDITTQDELNEAAMRDRASRDEERALR) the chain is on the cytoplasmic side. The chain crosses the membrane as a helical span at residues 31-50 (LGWWLVLAGFGGFLLWALLA). The Periplasmic portion of the chain corresponds to 51-448 (PLDKGVAVQG…DRMHLALTEE (398 aa)).

It belongs to the membrane fusion protein (MFP) (TC 8.A.1) family.

Its subcellular location is the cell inner membrane. In terms of biological role, involved in the secretion of proteases A, B, C and G. In Dickeya chrysanthemi (Pectobacterium chrysanthemi), this protein is Proteases secretion protein PrtE (prtE).